A 220-amino-acid polypeptide reads, in one-letter code: Pyrrolidone-carboxylate peptidase (220 aa).

Residues Glu80, Cys143, and His167 contribute to the active site.

It belongs to the peptidase C15 family. In terms of assembly, homotetramer.

It localises to the cytoplasm. The enzyme catalyses Release of an N-terminal pyroglutamyl group from a polypeptide, the second amino acid generally not being Pro.. Removes 5-oxoproline from various penultimate amino acid residues except L-proline. The chain is Pyrrolidone-carboxylate peptidase (pcp) from Thermococcus litoralis (strain ATCC 51850 / DSM 5473 / JCM 8560 / NS-C).